The sequence spans 303 residues: Zinc transporter ZIP9-A (303 aa).

The helical transmembrane segment at I7 to A27 threads the bilayer. An N-linked (GlcNAc...) asparagine glycan is attached at N29. Transmembrane regions (helical) follow at residues L35–I55, A102–G122, I142–A162, L172–F192, and H206–S226. N237 is a glycosylation site (N-linked (GlcNAc...) asparagine). 2 helical membrane passes run G240–P260 and L282–Q302.

Belongs to the ZIP transporter (TC 2.A.5) family.

The protein localises to the golgi apparatus. Its subcellular location is the trans-Golgi network membrane. It localises to the cell membrane. It is found in the cytoplasm. The protein resides in the perinuclear region. The protein localises to the mitochondrion. Its subcellular location is the nucleus. The catalysed reaction is Zn(2+)(in) = Zn(2+)(out). Transports zinc ions across cell and organelle membranes into the cytoplasm and regulates intracellular zinc homeostasis. Participates in the zinc ions efflux out of the secretory compartments. Regulates intracellular zinc level, resulting in the enhancement of AKT1 and MAPK3/MAPK1 (Erk1/2) phosphorylation in response to the BCR activation. Also functions as a membrane androgen receptor that mediates, through a G protein, the non-classical androgen signaling pathway, characterized by the activation of MAPK3/MAPK1 (Erk1/2) and transcription factors CREB1 or ATF1. Moreover, has dual functions as a membrane-bound androgen receptor and as an androgen-dependent zinc transporter both of which are mediated through an inhibitory G protein (Gi) that mediates both MAP kinase and zinc signaling leading to the androgen-dependent apoptotic process. The sequence is that of Zinc transporter ZIP9-A (slc39a9-a) from Xenopus laevis (African clawed frog).